The following is a 696-amino-acid chain: Rho-related BTB domain-containing protein 1 (696 aa).

The interval 1–210 (MDADMDYERP…DNAIRAALIS (210 aa)) is rho-like. Residues 21-28 (GDNAVGKT), 84-88 (DTFGD), and 140-143 (CQLD) each bind GTP. BTB domains follow at residues 266-427 (ADVL…DEKE) and 485-552 (SDVT…SPNL). The disordered stretch occupies residues 327–348 (VDPEEEREEGPPRIPQADQWKS).

It belongs to the small GTPase superfamily. Rho family. In terms of tissue distribution, ubiquitous, with highest levels in skeletal muscle, placenta, testis, stomach, and kidney, followed by uterus and adrenal gland. Expressed in a variety of fetal tissues.

This Homo sapiens (Human) protein is Rho-related BTB domain-containing protein 1 (RHOBTB1).